Consider the following 549-residue polypeptide: Zinc finger protein 266 (549 aa).

The region spanning 1 to 42 is the KRAB domain; sequence MLENYKNLATVGYQLFKPSLISWLEQEESRTVQRGDFQASEW. A C2H2-type 1; degenerate zinc finger spans residues 156–178; sequence FDCSDSGKSFINHSHLQGHLRTH. A C2H2-type 2; degenerate zinc finger spans residues 184–206; sequence HEWKECGRGFIHSTDLAVRIQTH. 12 C2H2-type zinc fingers span residues 212–234, 240–262, 268–290, 296–318, 324–346, 352–374, 380–402, 408–430, 436–458, 464–486, 492–514, and 520–542; these read YKCK…MGTH, YECK…RKTH, YKCK…MKIH, YECK…LKTH, FECK…FRIH, YKCK…ARTH, YECK…TRTH, FECV…LRIH, FECL…MRTH, FTCM…MRIH, YKCK…ERTH, and YECK…ERRH. The interval 530 to 549 is disordered; it reads SSSSSFRNHERRHADERLSA.

Belongs to the krueppel C2H2-type zinc-finger protein family.

The protein localises to the nucleus. May be involved in transcriptional regulation. This chain is Zinc finger protein 266 (ZNF266), found in Homo sapiens (Human).